The primary structure comprises 178 residues: Methylmalonyl-CoA epimerase, mitochondrial (178 aa).

The transit peptide at 1 to 38 (MRRVVKAAALAAGATGLFSRVQTSVAIGRSFSTPQSQF) directs the protein to the mitochondrion. Positions 49 to 178 (RLNHVAVAVP…GGVLVELEQA (130 aa)) constitute a VOC domain. H52 is a binding site for Co(2+). Position 116 is an N6-succinyllysine (K116). H124 contributes to the Co(2+) binding site. K152 carries the N6-acetyllysine; alternate modification. An N6-succinyllysine; alternate modification is found at K152. E174 is a binding site for Co(2+).

Belongs to the methylmalonyl-CoA epimerase family.

The protein localises to the mitochondrion. The catalysed reaction is (R)-methylmalonyl-CoA = (S)-methylmalonyl-CoA. Methylmalonyl-CoA epimerase involved in propionyl-CoA metabolism. This is Methylmalonyl-CoA epimerase, mitochondrial from Mus musculus (Mouse).